Reading from the N-terminus, the 163-residue chain is Large ribosomal subunit protein bL17 (163 aa).

The span at 123 to 135 shows a compositional bias: low complexity; that stretch reads AEASRATRASASK. The segment at 123–163 is disordered; it reads AEASRATRASASKKAAEEAETEEVVEAPAEETATEEAAEEK. The span at 140 to 163 shows a compositional bias: acidic residues; it reads EAETEEVVEAPAEETATEEAAEEK.

The protein belongs to the bacterial ribosomal protein bL17 family. As to quaternary structure, part of the 50S ribosomal subunit. Contacts protein L32.

The protein is Large ribosomal subunit protein bL17 of Corynebacterium glutamicum (strain ATCC 13032 / DSM 20300 / JCM 1318 / BCRC 11384 / CCUG 27702 / LMG 3730 / NBRC 12168 / NCIMB 10025 / NRRL B-2784 / 534).